We begin with the raw amino-acid sequence, 696 residues long: Verrucotoxin subunit beta (696 aa).

The 191-residue stretch at 506-696 (HMPGVETIKD…GCTTESQWSN (191 aa)) folds into the B30.2/SPRY domain.

Belongs to the SNTX/VTX toxin family. In terms of assembly, tetramer composed of 2 alpha and 2 beta subunits. Post-translationally, glycosylated. Expressed by the venom gland.

It localises to the secreted. Its function is as follows. This lethal (towards mice) toxin induces hemolytic, cytolytic and hypotensive activities. Inhibits calcium channels and may activate ATP-sensitive potassium channels in frog atrial heart muscle. In guinea-pig ventricular myocytes, it modulates calcium channel activity through the beta-adrenoceptor-cAMP-PKA pathway (ADRB). The sequence is that of Verrucotoxin subunit beta from Synanceia verrucosa (Reef stonefish).